We begin with the raw amino-acid sequence, 555 residues long: Natural resistance-associated macrophage protein 1 (555 aa).

The Cytoplasmic portion of the chain corresponds to 1–63 (MSGSGPAMAS…STPGFSFRKL (63 aa)). The chain crosses the membrane as a helical span at residues 64-81 (WAFTGPGFLMSIAYLDPG). Residues 82 to 90 (NVESDLQCG) lie on the Extracellular side of the membrane. Residues 91-110 (AVAGFKLLWVLLWATVLGLL) traverse the membrane as a helical segment. Topologically, residues 111–147 (CQRLAIRLGVVTGKDLAEICYLYYPRVPRVLLWLMME) are cytoplasmic. The helical transmembrane segment at 148-168 (IAIIGSDMQEVIGTAIAFSLL) threads the bilayer. Residues 169-172 (SAGR) are Extracellular-facing. Residues 173-192 (IPLWGGVLITITDTLFFLFL) traverse the membrane as a helical segment. The Cytoplasmic portion of the chain corresponds to 193–201 (DKYGLRKLE). A helical transmembrane segment spans residues 202 to 222 (AFFGFLITIMALTFGYEYVMV). Residues 223-245 (RPAQTEVLKGIFLPYCPGCGREE) lie on the Extracellular side of the membrane. Residues 246–264 (LLQAVGIVGAIIMPHNIFL) traverse the membrane as a helical segment. The Cytoplasmic portion of the chain corresponds to 265–292 (HSSLVKTRAIDRSKKEEVKEANMYFLTE). Residues 293–312 (SCLALFVSFLINLFVMAVFG) traverse the membrane as a helical segment. Residues 313-354 (EAFYHQRNEDVHNKCVNSSVSRYASIFPINNETVSVDIYQGG) are Extracellular-facing. Residues N329 and N343 are each glycosylated (N-linked (GlcNAc...) asparagine). Residues 355–374 (VILGCYFGAAALYIWAVGIL) traverse the membrane as a helical segment. The Cytoplasmic segment spans residues 375–405 (AAGQSSTMTGTYAGQFVMEGFLQLRWSRFTR). A helical transmembrane segment spans residues 406 to 423 (VLFTRSLAILPTLFVAAF). Residues 424–434 (RDVSQLTGMND) are Extracellular-facing. Residues 435 to 455 (LLNVLQSILLPFAVLPVLTFT) traverse the membrane as a helical segment. Over 456–471 (SLRPLMHDFANGLLGQ) the chain is Cytoplasmic. The helical transmembrane segment at 472 to 493 (VLMSLITGLVCAINVYFVVDFL) threads the bilayer. At 494-501 (PTLRGLGY) the chain is on the extracellular side. A helical membrane pass occupies residues 502-521 (LIPLGLLLVAYVAFVTYLLW). Residues 522-555 (TCSIAHGARFLARGRYNRFSFDVTADVPGLAGPH) are Cytoplasmic-facing.

Belongs to the NRAMP family. Macrophages; spleen and thymus and at lower level in liver and lung.

Its subcellular location is the late endosome membrane. It is found in the lysosome membrane. It carries out the reaction Zn(2+)(in) + H(+)(out) = Zn(2+)(out) + H(+)(in). The catalysed reaction is Fe(2+)(in) + H(+)(out) = Fe(2+)(out) + H(+)(in). The enzyme catalyses Mn(2+)(in) + H(+)(out) = Mn(2+)(out) + H(+)(in). Macrophage-specific antiporter that fluxes metal ions in either direction against a proton gradient. Localized to late endosomal lysosomal membranes, delivers bivalent cations from the cytosol into these acidic compartments where they may directly affect antimicrobial activity. Involved in iron metabolism and host natural resistance to infection with intracellular parasites. Pathogen resistance involves sequestration of Fe(2+) and Mn(2+), cofactors of both prokaryotic and eukaryotic catalases and superoxide dismutases, not only to protect the macrophage against its own generation of reactive oxygen species, but to deny the cations to the pathogen for synthesis of its protective enzymes. This chain is Natural resistance-associated macrophage protein 1 (SLC11A1), found in Gallus gallus (Chicken).